Consider the following 387-residue polypeptide: Synaptotagmin-8 (387 aa).

Topologically, residues Met-1 to Arg-34 are extracellular. The chain crosses the membrane as a helical; Signal-anchor for type III membrane protein span at residues Trp-35–Ala-55. The Cytoplasmic segment spans residues Ala-56 to Ser-387. The interval Lys-70 to Gly-99 is disordered. 2 consecutive C2 domains span residues Gln-103–Tyr-219 and Gln-231–Ala-346.

This sequence belongs to the synaptotagmin family. Homodimer or homooligomer. Homodimerization and homooligomerization do not depend on Ca(2+). Interacts with SYNCRIP isoform 2 C-terminus. Binds inositol 1,3,4,5-tetrakisphosphate (IP4). Binds to AP2 in a Ca(2+)-independent manner. Interacts with STX1A, STX1B and STX2; the interaction is Ca(2+)-dependent.

Its subcellular location is the cell membrane. It is found in the cytoplasmic vesicle. The protein localises to the secretory vesicle. It localises to the acrosome. Involved in the trafficking and exocytosis of secretory vesicles in non-neuronal tissues. Mediates Ca(2+)-regulation of exocytosis acrosomal reaction in sperm. May mediate Ca(2+)-regulation of exocytosis in insulin secreted cells. The chain is Synaptotagmin-8 (SYT8) from Homo sapiens (Human).